Consider the following 193-residue polypeptide: Cysteine and glycine-rich protein 2 (193 aa).

Residues 10–61 (CGACGRTVYHAEEVQCDGRTFHRCCFLCMVCRKNLDSTTVAIHDEEIYCKSC) enclose the LIM zinc-binding 1 domain. Residues 64 to 69 (KKYGPK) carry the Nuclear localization signal motif. Residue lysine 91 forms a Glycyl lysine isopeptide (Lys-Gly) (interchain with G-Cter in SUMO2) linkage. Lysine 112 and lysine 131 each carry N6-acetyllysine. Residues 119–170 (CSRCGDSVYAAEKIIGAGKPWHKNCFRCAKCGKSLESTTLTEKEGEIYCKGC) enclose the LIM zinc-binding 2 domain. Lysine 137 is subject to N6-acetyllysine; alternate. Position 137 is an N6-succinyllysine; alternate (lysine 137). Lysine 161 is subject to N6-acetyllysine.

In terms of assembly, interacts with KAT14. The LIM domain 1 is necessary and sufficient for this interaction. Interacts with GLRX3. Highly expressed in the aorta; weakly found in the kidney, thymus, and intestine. Barely detectable in brain, testis, esophagus, lung, liver, aortic adventitia, vena cava, or uterus; not present in heart and skeletal muscle.

The protein resides in the nucleus. In terms of biological role, drastically down-regulated in response to PDGF-BB or cell injury, that promote smooth muscle cell proliferation and dedifferentiation. Seems to play a role in the development of the embryonic vascular system. The polypeptide is Cysteine and glycine-rich protein 2 (Csrp2) (Rattus norvegicus (Rat)).